The following is a 995-amino-acid chain: UPF0182 protein NFA_45260 (995 aa).

Transmembrane regions (helical) follow at residues 18–38, 63–83, 115–135, 176–196, 211–231, 260–280, and 288–308; these read VLLV…RFTD, IILF…ALLL, FGIG…QSNW, FVAV…FGGL, IQLA…YWFD, KLIL…GVVL, and MAAA…PLVV. The disordered stretch occupies residues 904–957; that stretch reads ATPFGGDPATRPQPGTAPPVVDSTQPPADGGTPQPQTTPPPTGSAAKDAAAAEL. Composition is skewed to low complexity over residues 927–938 and 946–955; these read TQPPADGGTPQP and GSAAKDAAAA.

This sequence belongs to the UPF0182 family.

It is found in the cell membrane. This is UPF0182 protein NFA_45260 from Nocardia farcinica (strain IFM 10152).